The primary structure comprises 382 residues: Protein RecA (382 aa).

79-86 (GPESSGKT) contacts ATP.

It belongs to the RecA family.

The protein localises to the cytoplasm. In terms of biological role, can catalyze the hydrolysis of ATP in the presence of single-stranded DNA, the ATP-dependent uptake of single-stranded DNA by duplex DNA, and the ATP-dependent hybridization of homologous single-stranded DNAs. It interacts with LexA causing its activation and leading to its autocatalytic cleavage. The chain is Protein RecA from Streptococcus sanguinis (strain SK36).